A 557-amino-acid chain; its full sequence is 2-isopropylmalate synthase (557 aa).

The Pyruvate carboxyltransferase domain occupies 31–304 (PTWCSVDLRD…DPGLNFASML (274 aa)). Positions 40, 243, 245, and 279 each coordinate Mg(2+). Residues 439–557 (IENPIKFLNF…NTMIKDSAAV (119 aa)) are regulatory domain.

This sequence belongs to the alpha-IPM synthase/homocitrate synthase family. LeuA type 2 subfamily. In terms of assembly, homodimer. Requires Mg(2+) as cofactor.

Its subcellular location is the cytoplasm. It carries out the reaction 3-methyl-2-oxobutanoate + acetyl-CoA + H2O = (2S)-2-isopropylmalate + CoA + H(+). The protein operates within amino-acid biosynthesis; L-leucine biosynthesis; L-leucine from 3-methyl-2-oxobutanoate: step 1/4. Functionally, catalyzes the condensation of the acetyl group of acetyl-CoA with 3-methyl-2-oxobutanoate (2-ketoisovalerate) to form 3-carboxy-3-hydroxy-4-methylpentanoate (2-isopropylmalate). This chain is 2-isopropylmalate synthase, found in Desulfitobacterium hafniense (strain Y51).